Reading from the N-terminus, the 485-residue chain is NADH-quinone oxidoreductase subunit N (485 aa).

A run of 14 helical transmembrane segments spans residues 8–28, 35–55, 71–91, 105–125, 127–147, 159–179, 203–223, 235–255, 271–291, 297–317, 326–346, 373–393, 408–430, and 455–475; these read LIALLPLLIVGLTVVVVMLSI, FLNATLSVIGLNAALVSLWFV, GFAMLYTGLVLLASLATCTFA, FYLLVLIAALGGILLANANHL, SLFLGIELISLPLFGLVGYAF, YTILSAAASSFLLFGMALVYA, LLAGFGMMIVGLGFKLSLVPF, PAPVSTFLATASKIAIFGVVM, VVLAIIAFASIIFGNLMALSQ, LLGYSSISHLGYLLVALIALQ, VGGYLAGYLFSSLGAFGVVSL, AAVMTVMMLSLAGIPMTLGFI, WWLVGAVVVGSAIGLYYYLRVAV, and IVVLISALLVLVLGVWPQPLI.

This sequence belongs to the complex I subunit 2 family. In terms of assembly, NDH-1 is composed of 13 different subunits. Subunits NuoA, H, J, K, L, M, N constitute the membrane sector of the complex.

It is found in the cell inner membrane. It catalyses the reaction a quinone + NADH + 5 H(+)(in) = a quinol + NAD(+) + 4 H(+)(out). In terms of biological role, NDH-1 shuttles electrons from NADH, via FMN and iron-sulfur (Fe-S) centers, to quinones in the respiratory chain. The immediate electron acceptor for the enzyme in this species is believed to be ubiquinone. Couples the redox reaction to proton translocation (for every two electrons transferred, four hydrogen ions are translocated across the cytoplasmic membrane), and thus conserves the redox energy in a proton gradient. The protein is NADH-quinone oxidoreductase subunit N of Shigella boydii serotype 18 (strain CDC 3083-94 / BS512).